Reading from the N-terminus, the 415-residue chain is 26S proteasome regulatory subunit 6B (415 aa).

203 to 210 (GPPGCGKT) serves as a coordination point for ATP.

Belongs to the AAA ATPase family.

It is found in the cytoplasm. It localises to the nucleus. In terms of biological role, the 26S proteasome is involved in the ATP-dependent degradation of ubiquitinated proteins. The regulatory (or ATPase) complex confers ATP dependency and substrate specificity to the 26S complex. The sequence is that of 26S proteasome regulatory subunit 6B from Manduca sexta (Tobacco hawkmoth).